The primary structure comprises 74 residues: Complement C5a anaphylatoxin (74 aa).

The segment at 15–44 (YAMLKKCCYDGAYRNDDETCEERAARIKIG) is involved in C5AR1 binding. Intrachain disulfides connect cysteine 21–cysteine 47, cysteine 22–cysteine 54, and cysteine 34–cysteine 55. The Anaphylatoxin-like domain occupies 21–55 (CCYDGAYRNDDETCEERAARIKIGPKCVKAFKDCC). The tract at residues 72–74 (LGR) is required for 90% of C5a activity; although Arg-74 is not essential.

It is found in the secreted. Mediator of local inflammatory process released following cleavage by C5 convertase. Acts by binding to its receptor (C5AR1 or C5AR2), activating G protein-coupled receptor signaling and inducing a variety of responses including intracellular calcium release, contraction of smooth muscle, increased vascular permeability, and histamine release from mast cells and basophilic leukocytes. C5a is also a potent chemokine which stimulates the locomotion of polymorphonuclear leukocytes and directs their migration toward sites of inflammation. The sequence is that of Complement C5a anaphylatoxin (C5) from Sus scrofa (Pig).